The following is a 254-amino-acid chain: GPI alpha-1,4-mannosyltransferase I, stabilizing subunit (254 aa).

The N-terminal stretch at M1–A22 is a signal peptide. The Lumenal segment spans residues D23 to L226. An N-linked (GlcNAc...) asparagine glycan is attached at N211. A helical membrane pass occupies residues V227–F247. Topologically, residues K248–L254 are cytoplasmic.

It belongs to the PIGX family. In terms of assembly, part of the glycosylphosphatidylinositol-mannosyltransferase I complex that is composed of PIGM and PIGX. Interacts with PIGM; PIGX stabilizes PIGM.

The protein resides in the endoplasmic reticulum membrane. Its pathway is glycolipid biosynthesis; glycosylphosphatidylinositol-anchor biosynthesis. Its function is as follows. Stabilizing subunit of the glycosylphosphatidylinositol-mannosyltransferase I complex which catalyzes the transfer of the first mannose, via an alpha-1,4 bond from a dolichol-phosphate-mannose (Dol-P-Man) to the glucosaminyl acyl phosphatidylinositol (GlcN-(acyl)PI) intermediate to generate alpha-D-Man-(1-&gt;4)-alpha-D-GlcN-(1-&gt;6)-(1-radyl,2-acyl-sn-glycero-3-phospho)-2-acyl-inositol and participates in the sixth step of the glycosylphosphatidylinositol-anchor biosynthesis. Probably acts by stabilizing the mannosyltransferase PIGM. The polypeptide is GPI alpha-1,4-mannosyltransferase I, stabilizing subunit (Mus musculus (Mouse)).